The chain runs to 471 residues: Alpha-galactosidase 6 (471 aa).

Residues 1-18 form the signal peptide; it reads MFAFYFLTACISLKGVFG. An intrachain disulfide couples cysteine 42 to cysteine 74. Substrate is bound by residues aspartate 72 and aspartate 73. Asparagine 105 is a glycosylation site (N-linked (GlcNAc...) asparagine). Cysteine 121 and cysteine 151 are disulfide-bonded. Lysine 147 is a substrate binding site. Aspartate 149 functions as the Nucleophile in the catalytic mechanism. N-linked (GlcNAc...) asparagine glycosylation occurs at asparagine 175. Substrate is bound at residue arginine 205. The Proton donor role is filled by aspartate 209. Disulfide bonds link cysteine 221-cysteine 237 and cysteine 223-cysteine 230. Residue glutamine 251 participates in substrate binding. Asparagine 270, asparagine 370, asparagine 403, asparagine 422, asparagine 435, and asparagine 454 each carry an N-linked (GlcNAc...) asparagine glycan.

This sequence belongs to the glycosyl hydrolase 27 family. In terms of assembly, homotetramer.

The protein localises to the secreted. The enzyme catalyses Hydrolysis of terminal, non-reducing alpha-D-galactose residues in alpha-D-galactosides, including galactose oligosaccharides, galactomannans and galactolipids.. This Saccharomyces cerevisiae (Baker's yeast) protein is Alpha-galactosidase 6 (MEL6).